We begin with the raw amino-acid sequence, 559 residues long: Malate synthase, glyoxysomal (559 aa).

Residue Arg173 is the Proton acceptor of the active site. Catalysis depends on Asp459, which acts as the Proton donor. A Microbody targeting signal motif is present at residues 557–559 (CKL).

It belongs to the malate synthase family.

It localises to the glyoxysome. The catalysed reaction is glyoxylate + acetyl-CoA + H2O = (S)-malate + CoA + H(+). The protein operates within carbohydrate metabolism; glyoxylate cycle; (S)-malate from isocitrate: step 2/2. This Zea mays (Maize) protein is Malate synthase, glyoxysomal (LIP).